Here is a 369-residue protein sequence, read N- to C-terminus: DNA replication and repair protein RecF (369 aa).

30–37 (GQNGMGKT) serves as a coordination point for ATP.

This sequence belongs to the RecF family.

It is found in the cytoplasm. In terms of biological role, the RecF protein is involved in DNA metabolism; it is required for DNA replication and normal SOS inducibility. RecF binds preferentially to single-stranded, linear DNA. It also seems to bind ATP. This Bacteroides thetaiotaomicron (strain ATCC 29148 / DSM 2079 / JCM 5827 / CCUG 10774 / NCTC 10582 / VPI-5482 / E50) protein is DNA replication and repair protein RecF.